The following is a 238-amino-acid chain: ATP synthase subunit a (238 aa).

Helical transmembrane passes span Met18–Gly38, Phe76–Pro96, Val117–Ile137, Leu195–Ile215, and Gly216–Glu236.

Belongs to the ATPase A chain family. As to quaternary structure, F-type ATPases have 2 components, CF(1) - the catalytic core - and CF(0) - the membrane proton channel. CF(1) has five subunits: alpha(3), beta(3), gamma(1), delta(1), epsilon(1). CF(0) has three main subunits: a(1), b(2) and c(9-12). The alpha and beta chains form an alternating ring which encloses part of the gamma chain. CF(1) is attached to CF(0) by a central stalk formed by the gamma and epsilon chains, while a peripheral stalk is formed by the delta and b chains.

Its subcellular location is the cell membrane. Its function is as follows. Key component of the proton channel; it plays a direct role in the translocation of protons across the membrane. The protein is ATP synthase subunit a of Alkalihalophilus pseudofirmus (strain ATCC BAA-2126 / JCM 17055 / OF4) (Bacillus pseudofirmus).